The chain runs to 216 residues: uncharacterized protein (216 aa).

Residues 18–47 (PPDSPIEDRCGSCNICVDSCPTGALVQGGQ) form the 4Fe-4S ferredoxin-type domain. [4Fe-4S] cluster-binding residues include Cys27, Cys30, Cys33, Cys37, Cys79, Cys82, and Cys86.

This is an uncharacterized protein from Geobacillus stearothermophilus (Bacillus stearothermophilus).